The chain runs to 804 residues: Leucine--tRNA ligase (804 aa).

The short motif at 40-51 (PYPSGAGLHVGH) is the 'HIGH' region element. Residues 576-580 (KMSKS) carry the 'KMSKS' region motif. Lys-579 contributes to the ATP binding site.

This sequence belongs to the class-I aminoacyl-tRNA synthetase family.

The protein resides in the cytoplasm. It carries out the reaction tRNA(Leu) + L-leucine + ATP = L-leucyl-tRNA(Leu) + AMP + diphosphate. This chain is Leucine--tRNA ligase, found in Staphylococcus aureus (strain Mu3 / ATCC 700698).